We begin with the raw amino-acid sequence, 57 residues long: MAVPKKRTSMSKKHIRRNYWKRKGYKAAVKAFSLGKSVSTGHSKSFFVQQTTTKTNK.

It belongs to the bacterial ribosomal protein bL32 family.

Its subcellular location is the plastid. The protein resides in the chloroplast. The polypeptide is Large ribosomal subunit protein bL32c (Amborella trichopoda).